Consider the following 155-residue polypeptide: Large ribosomal subunit protein uL16 (155 aa).

The interval 1 to 22 (MLSPKRTKYRKQQRGRMKGKAT) is disordered.

Belongs to the universal ribosomal protein uL16 family. In terms of assembly, part of the 50S ribosomal subunit.

Functionally, binds 23S rRNA and is also seen to make contacts with the A and possibly P site tRNAs. This Synechococcus sp. (strain JA-2-3B'a(2-13)) (Cyanobacteria bacterium Yellowstone B-Prime) protein is Large ribosomal subunit protein uL16.